An 834-amino-acid polypeptide reads, in one-letter code: DIS3-like exonuclease 2 (834 aa).

A compositionally biased stretch (polar residues) spans 1 to 23 (MHNSEFLSPVQSGTQRGTNRSIL). The tract at residues 1-35 (MHNSEFLSPVQSGTQRGTNRSILNNKKSGKGKKKS) is disordered. Residues Asp354 and Asp363 each contribute to the Mg(2+) site.

It belongs to the RNR ribonuclease family. DIS3L2 subfamily. Mg(2+) is required as a cofactor. The cofactor is Mn(2+).

The protein resides in the cytoplasm. It localises to the P-body. Its function is as follows. 3'-5'-exoribonuclease that specifically recognizes RNAs polyuridylated at their 3' end and mediates their degradation. Component of an exosome-independent RNA degradation pathway that mediates degradation of both mRNAs and miRNAs that have been polyuridylated by a terminal uridylyltransferase. Essential for correct mitosis, and negatively regulates cell proliferation. This is DIS3-like exonuclease 2 from Xenopus tropicalis (Western clawed frog).